Consider the following 359-residue polypeptide: MEEMTVQSNQSSYPIYIGQGLRYQLSSYIEKKYTKLFIITDDQVGSRYLKDVLHGYPSEENICHFTIPSGESSKSIDNFYRLQTEALQNGLDRHSLIIALGGGVVGDLAGLVAATFMRGIDYIQVPTTILAHDSSVGGKVAINHHLGKNLIGSFFPPVAVIYDIETLSTLPPHEIRSGYAEIVKEGLIANQKMFLSLLDHSLASIKPHQLEIYLKAGIQVKSRIVEQDEKEANIRKFLNLGHTLGHALETIHGYGNITHGEAVANGLLFALHVSEYEFEIQLPFYQLYQWLKDNEYPILSFSEEEITQLIELMKTDKKSVGGTIQMVLLKEVEDPVTVSLDNSMMKQHLSTYLERMEKL.

Residues S69–K74, G103–D107, T127–T128, K139, K148, and T166–T169 contribute to the NAD(+) site. Zn(2+)-binding residues include E181, H242, and H259.

It belongs to the sugar phosphate cyclases superfamily. Dehydroquinate synthase family. Requires NAD(+) as cofactor. The cofactor is Co(2+). Zn(2+) serves as cofactor.

Its subcellular location is the cytoplasm. The catalysed reaction is 7-phospho-2-dehydro-3-deoxy-D-arabino-heptonate = 3-dehydroquinate + phosphate. The protein operates within metabolic intermediate biosynthesis; chorismate biosynthesis; chorismate from D-erythrose 4-phosphate and phosphoenolpyruvate: step 2/7. Its function is as follows. Catalyzes the conversion of 3-deoxy-D-arabino-heptulosonate 7-phosphate (DAHP) to dehydroquinate (DHQ). The polypeptide is 3-dehydroquinate synthase (Oceanobacillus iheyensis (strain DSM 14371 / CIP 107618 / JCM 11309 / KCTC 3954 / HTE831)).